Consider the following 181-residue polypeptide: MMQYLVVSLALCATICSAAQTRNMPIQAIAYLIGPVQSDNTQVKGNVTFTQNDCGQNVHVRVQLEGLKEGKHGFHIHEKGDLTNGCISMGAHYNPDKVDHGGPDHEVRHVGDLGNLEANSTGIIDVTYTDQVITLTGKLGIIGRGVVVHELEDDLGLGNHTDSKKTGNAGGRIACGVIGIK.

Residues 1 to 18 (MMQYLVVSLALCATICSA) form the signal peptide. Asn-46 carries an N-linked (GlcNAc...) asparagine glycan. Cu cation contacts are provided by His-75, His-77, and His-92. A disulfide bridge connects residues Cys-86 and Cys-175. His-92, His-100, His-109, and Asp-112 together coordinate Zn(2+). The N-linked (GlcNAc...) asparagine glycan is linked to Asn-119. Residue His-149 coordinates Cu cation. The N-linked (GlcNAc...) asparagine glycan is linked to Asn-159.

It belongs to the Cu-Zn superoxide dismutase family. Cu cation serves as cofactor. Zn(2+) is required as a cofactor. As to expression, expressed at higher levels in females compared to males.

It is found in the secreted. The enzyme catalyses 2 superoxide + 2 H(+) = H2O2 + O2. Its function is as follows. Protects the extracellular space from the toxic effects of reactive oxygen intermediates by converting superoxide radicals into hydrogen peroxide and oxygen. This chain is Extracellular superoxide dismutase [Cu-Zn], found in Drosophila melanogaster (Fruit fly).